The chain runs to 203 residues: LexA repressor (203 aa).

The segment at residues 30–50 (VREICQAVSLKSTSTVHGHLK) is a DNA-binding region (H-T-H motif). Active-site for autocatalytic cleavage activity residues include serine 127 and lysine 164.

It belongs to the peptidase S24 family. In terms of assembly, homodimer.

The catalysed reaction is Hydrolysis of Ala-|-Gly bond in repressor LexA.. Functionally, represses a number of genes involved in the response to DNA damage (SOS response), including recA and lexA. In the presence of single-stranded DNA, RecA interacts with LexA causing an autocatalytic cleavage which disrupts the DNA-binding part of LexA, leading to derepression of the SOS regulon and eventually DNA repair. In Clostridium perfringens (strain 13 / Type A), this protein is LexA repressor.